An 80-amino-acid chain; its full sequence is Translation initiation factor IF-1 (80 aa).

An S1-like domain is found at 6–80 (EKRKKEESDV…TSRGRIVYRK (75 aa)).

The protein belongs to the IF-1 family. As to quaternary structure, component of the 30S ribosomal translation pre-initiation complex which assembles on the 30S ribosome in the order IF-2 and IF-3, IF-1 and N-formylmethionyl-tRNA(fMet); mRNA recruitment can occur at any time during PIC assembly.

The protein localises to the cytoplasm. Functionally, one of the essential components for the initiation of protein synthesis. Stabilizes the binding of IF-2 and IF-3 on the 30S subunit to which N-formylmethionyl-tRNA(fMet) subsequently binds. Helps modulate mRNA selection, yielding the 30S pre-initiation complex (PIC). Upon addition of the 50S ribosomal subunit IF-1, IF-2 and IF-3 are released leaving the mature 70S translation initiation complex. This Deinococcus geothermalis (strain DSM 11300 / CIP 105573 / AG-3a) protein is Translation initiation factor IF-1.